We begin with the raw amino-acid sequence, 331 residues long: Ketol-acid reductoisomerase (NADP(+)) (331 aa).

The region spanning 2–182 is the KARI N-terminal Rossmann domain; sequence ARMYYDSDAN…GGTRAGILET (181 aa). NADP(+) is bound by residues 25–28, serine 51, serine 53, and 83–86; these read YGSQ and DEVQ. Histidine 108 is an active-site residue. Residue glycine 134 coordinates NADP(+). A KARI C-terminal knotted domain is found at 183–328; that stretch reads TFREETETDL…KDLRAMFSWL (146 aa). 4 residues coordinate Mg(2+): aspartate 191, glutamate 195, glutamate 227, and glutamate 231. A substrate-binding site is contributed by serine 252.

Belongs to the ketol-acid reductoisomerase family. It depends on Mg(2+) as a cofactor.

The catalysed reaction is (2R)-2,3-dihydroxy-3-methylbutanoate + NADP(+) = (2S)-2-acetolactate + NADPH + H(+). It carries out the reaction (2R,3R)-2,3-dihydroxy-3-methylpentanoate + NADP(+) = (S)-2-ethyl-2-hydroxy-3-oxobutanoate + NADPH + H(+). It functions in the pathway amino-acid biosynthesis; L-isoleucine biosynthesis; L-isoleucine from 2-oxobutanoate: step 2/4. The protein operates within amino-acid biosynthesis; L-valine biosynthesis; L-valine from pyruvate: step 2/4. Its function is as follows. Involved in the biosynthesis of branched-chain amino acids (BCAA). Catalyzes an alkyl-migration followed by a ketol-acid reduction of (S)-2-acetolactate (S2AL) to yield (R)-2,3-dihydroxy-isovalerate. In the isomerase reaction, S2AL is rearranged via a Mg-dependent methyl migration to produce 3-hydroxy-3-methyl-2-ketobutyrate (HMKB). In the reductase reaction, this 2-ketoacid undergoes a metal-dependent reduction by NADPH to yield (R)-2,3-dihydroxy-isovalerate. This Trichodesmium erythraeum (strain IMS101) protein is Ketol-acid reductoisomerase (NADP(+)).